Here is a 154-residue protein sequence, read N- to C-terminus: Bacterial ferritin (154 aa).

The Ferritin-like diiron domain occupies 1 to 145; sequence MQGHPEVIDY…QQLGLIARMG (145 aa). 9 residues coordinate Fe(3+): Glu-18, His-46, Glu-47, Glu-50, Glu-51, His-54, Glu-93, Asp-129, and His-130.

It belongs to the bacterioferritin family. The bacterioferritin (BFR) complex is formed of 24 subunits (FtnA and BfrB) arranged as 12 homodimers. The holocomplex contains about 8.7% Fe and 8.0% phosphate. In vivo purifies with BfrB in varying ratios, depending on the O(2) content; as O(2) decreases FtnA content rises. Pure FtnA BFR complexes are not isolated in situ, although in a bfrB deletion some iron will accumulate in FtnA ferritin complexes. Upon crystallization forms homooligomers of 24 subunits, the BFR complex, arranged as 12 dimers, that are packed together to form an approximately spherical molecule with a central cavity, in which large amounts of iron can be deposited. The BFR shell has three- and four-fold pores; Fe(2+) may move in and out of the shell via the four-fold pores. Does not interact with Bfd.

It localises to the cytoplasm. It catalyses the reaction 4 Fe(2+) + O2 + 4 H(+) = 4 Fe(3+) + 2 H2O. The catalysed reaction is Fe(2+)(in) = Fe(2+)(out). Its function is as follows. Plays a role in catalase A (katA) expression; activity is required for optimal KatA activity and resistance to H(2)O(2). Iron-storage protein that is part of the heterooligomeric bacterioferritin (BFR) complex. The ferroxidase center binds Fe(2+), oxidizes it using dioxygen to Fe(3+), and participates in subsequent Fe(3+) oxide mineral core formation within the central cavity of the BFR protein shell. Can store up to 520 iron atoms per ferritin protein molecule. Iron release requires only the input of electrons from ferredoxin NADP reductase (FPR), does not require Bfd. Does not bind heme. The polypeptide is Bacterial ferritin (Pseudomonas aeruginosa (strain ATCC 15692 / DSM 22644 / CIP 104116 / JCM 14847 / LMG 12228 / 1C / PRS 101 / PAO1)).